The chain runs to 189 residues: ComE operon protein 2 (189 aa).

Residues 5–132 (SWNQYFMAQS…PYAQELFEQA (128 aa)) form the CMP/dCMP-type deaminase domain. A Zn(2+)-binding site is contributed by histidine 70. Residue glutamate 72 is the Proton donor of the active site. Residues cysteine 98 and cysteine 101 each coordinate Zn(2+).

It belongs to the cytidine and deoxycytidylate deaminase family. It depends on Zn(2+) as a cofactor.

In terms of biological role, dispensable for transformability. This Bacillus subtilis (strain 168) protein is ComE operon protein 2 (comEB).